A 128-amino-acid chain; its full sequence is Protein C10 (128 aa).

It belongs to the UPF0456 family.

It localises to the cytoplasm. The protein is Protein C10 of Xenopus tropicalis (Western clawed frog).